A 103-amino-acid chain; its full sequence is MKTITIPRQNLTQYEIMLIMRPDLPEEKFLKFLSEIKEHAKRNLALEFNLSNRGRRKLAYAMRKFQDGIYIQFNFLGSGYILNSLIKRLKLEESILRYIVQKT.

The protein belongs to the bacterial ribosomal protein bS6 family.

The protein localises to the plastid. It is found in the chloroplast. In terms of biological role, binds together with bS18 to 16S ribosomal RNA. This chain is Small ribosomal subunit protein bS6c (rps6), found in Cyanidium caldarium (Red alga).